Reading from the N-terminus, the 81-residue chain is High-potential iron-sulfur protein (81 aa).

[4Fe-4S] cluster is bound by residues cysteine 43, cysteine 46, cysteine 59, and cysteine 73.

Belongs to the high-potential iron-sulfur protein (HiPIP) family. Homodimer.

It localises to the periplasm. Functionally, specific class of high-redox-potential 4Fe-4S ferredoxins. Functions in anaerobic electron transport in most purple and in some other photosynthetic bacteria and in at least one genus (Paracoccus) of halophilic, denitrifying bacteria. This is High-potential iron-sulfur protein from Halochromatium salexigens (Chromatium salexigens).